We begin with the raw amino-acid sequence, 329 residues long: Probable cell division protein WhiA (329 aa).

The segment at residues 275–308 is a DNA-binding region (H-T-H motif); it reads SLEELGALADPPLTKDAVAGRIRRLLAMADKRAQ.

This sequence belongs to the WhiA family.

Functionally, involved in cell division and chromosome segregation. The sequence is that of Probable cell division protein WhiA from Streptomyces griseus subsp. griseus (strain JCM 4626 / CBS 651.72 / NBRC 13350 / KCC S-0626 / ISP 5235).